The sequence spans 139 residues: ATP synthase epsilon chain (139 aa).

The protein belongs to the ATPase epsilon chain family. In terms of assembly, F-type ATPases have 2 components, CF(1) - the catalytic core - and CF(0) - the membrane proton channel. CF(1) has five subunits: alpha(3), beta(3), gamma(1), delta(1), epsilon(1). CF(0) has three main subunits: a, b and c.

It localises to the cell inner membrane. Functionally, produces ATP from ADP in the presence of a proton gradient across the membrane. This chain is ATP synthase epsilon chain, found in Pseudomonas entomophila (strain L48).